A 256-amino-acid chain; its full sequence is Thiazole synthase (256 aa).

K95 acts as the Schiff-base intermediate with DXP in catalysis. 1-deoxy-D-xylulose 5-phosphate contacts are provided by residues G156, 182-183 (AG), and 204-205 (NT).

This sequence belongs to the ThiG family. Homotetramer. Forms heterodimers with either ThiH or ThiS.

The protein localises to the cytoplasm. It carries out the reaction [ThiS sulfur-carrier protein]-C-terminal-Gly-aminoethanethioate + 2-iminoacetate + 1-deoxy-D-xylulose 5-phosphate = [ThiS sulfur-carrier protein]-C-terminal Gly-Gly + 2-[(2R,5Z)-2-carboxy-4-methylthiazol-5(2H)-ylidene]ethyl phosphate + 2 H2O + H(+). It functions in the pathway cofactor biosynthesis; thiamine diphosphate biosynthesis. Its function is as follows. Catalyzes the rearrangement of 1-deoxy-D-xylulose 5-phosphate (DXP) to produce the thiazole phosphate moiety of thiamine. Sulfur is provided by the thiocarboxylate moiety of the carrier protein ThiS. In vitro, sulfur can be provided by H(2)S. This chain is Thiazole synthase, found in Salmonella arizonae (strain ATCC BAA-731 / CDC346-86 / RSK2980).